Here is a 566-residue protein sequence, read N- to C-terminus: NAD-dependent malic enzyme 3 (566 aa).

Catalysis depends on Tyr105, which acts as the Proton donor. Lys178 serves as the catalytic Proton acceptor. 3 residues coordinate a divalent metal cation: Glu249, Asp250, and Asp273. Residues Ala306–Ala309, Asn423, and Asn468 each bind NAD(+).

It belongs to the malic enzymes family. Mg(2+) is required as a cofactor. The cofactor is Mn(2+).

The enzyme catalyses (S)-malate + NAD(+) = pyruvate + CO2 + NADH. It carries out the reaction oxaloacetate + H(+) = pyruvate + CO2. Its function is as follows. Catalyzes the decarboxylation of malate to pyruvate. Can use NAD and NADP, but with a strong preference for NAD. Can also catalyze the decarboxylation of oxaloacetate. Involved in keeping the ATP levels high. This chain is NAD-dependent malic enzyme 3 (malS), found in Bacillus subtilis (strain 168).